A 304-amino-acid chain; its full sequence is Oxygen-dependent coproporphyrinogen-III oxidase (304 aa).

Serine 93 is a binding site for substrate. Histidine 97 and histidine 107 together coordinate a divalent metal cation. Histidine 107 (proton donor) is an active-site residue. 109 to 111 (NVR) lines the substrate pocket. Histidine 146 and histidine 176 together coordinate a divalent metal cation. Residues 241-276 (YVEFNLVYDRGTLFGLQSGGRTESILMSLPPQVRWG) form an important for dimerization region. 259–261 (GGR) contacts substrate.

Belongs to the aerobic coproporphyrinogen-III oxidase family. As to quaternary structure, homodimer. The cofactor is a divalent metal cation.

The protein resides in the cytoplasm. The enzyme catalyses coproporphyrinogen III + O2 + 2 H(+) = protoporphyrinogen IX + 2 CO2 + 2 H2O. The protein operates within porphyrin-containing compound metabolism; protoporphyrin-IX biosynthesis; protoporphyrinogen-IX from coproporphyrinogen-III (O2 route): step 1/1. In terms of biological role, involved in the heme biosynthesis. Catalyzes the aerobic oxidative decarboxylation of propionate groups of rings A and B of coproporphyrinogen-III to yield the vinyl groups in protoporphyrinogen-IX. The protein is Oxygen-dependent coproporphyrinogen-III oxidase of Pseudomonas savastanoi pv. phaseolicola (strain 1448A / Race 6) (Pseudomonas syringae pv. phaseolicola (strain 1448A / Race 6)).